The following is a 145-amino-acid chain: Group IID secretory phospholipase A2 (145 aa).

The N-terminal stretch at 1 to 20 is a signal peptide; it reads MELALLCGLVVMAGVIPIQG. 7 cysteine pairs are disulfide-bonded: C46–C138, C48–C64, C63–C118, C69–C145, C70–C111, C79–C104, and C97–C109. The Ca(2+) site is built by H47, G49, and G51. Residue H67 is part of the active site. Residue D68 coordinates Ca(2+). N-linked (GlcNAc...) asparagine glycosylation is present at N89. Residue D112 is part of the active site.

This sequence belongs to the phospholipase A2 family. Ca(2+) serves as cofactor. Highly expressed in pancreas and spleen and less abundantly in colon, thymus, placenta, small intestine, and prostate.

It localises to the secreted. It carries out the reaction a 1,2-diacyl-sn-glycero-3-phosphoethanolamine + H2O = a 1-acyl-sn-glycero-3-phosphoethanolamine + a fatty acid + H(+). It catalyses the reaction 1-hexadecanoyl-2-(9Z-octadecenoyl)-sn-glycero-3-phosphoethanolamine + H2O = 1-hexadecanoyl-sn-glycero-3-phosphoethanolamine + (9Z)-octadecenoate + H(+). The enzyme catalyses 1-hexadecanoyl-2-(9Z,12Z-octadecadienoyl)-sn-glycero-3-phosphoethanolamine + H2O = 1-hexadecanoyl-sn-glycero-3-phosphoethanolamine + (9Z,12Z)-octadecadienoate + H(+). The catalysed reaction is 1,2-dihexadecanoyl-sn-glycero-3-phospho-(1'-sn-glycerol) + H2O = 1-hexadecanoyl-sn-glycero-3-phospho-(1'-sn-glycerol) + hexadecanoate + H(+). It carries out the reaction 1-hexadecanoyl-2-(9Z-octadecenoyl)-sn-glycero-3-phospho-(1'-sn-glycerol) + H2O = 1-hexadecanoyl-sn-glycero-3-phospho-(1'-sn-glycerol) + (9Z)-octadecenoate + H(+). It catalyses the reaction a 1,2-diacyl-sn-glycero-3-phosphocholine + H2O = a 1-acyl-sn-glycero-3-phosphocholine + a fatty acid + H(+). The enzyme catalyses 1,2-dihexadecanoyl-sn-glycero-3-phosphocholine + H2O = 1-hexadecanoyl-sn-glycero-3-phosphocholine + hexadecanoate + H(+). The catalysed reaction is 1-hexadecanoyl-2-(9Z-octadecenoyl)-sn-glycero-3-phosphocholine + H2O = 1-hexadecanoyl-sn-glycero-3-phosphocholine + (9Z)-octadecenoate + H(+). It carries out the reaction 1-hexadecanoyl-2-(9Z,12Z-octadecadienoyl)-sn-glycero-3-phosphocholine + H2O = (9Z,12Z)-octadecadienoate + 1-hexadecanoyl-sn-glycero-3-phosphocholine + H(+). It catalyses the reaction 1-hexadecanoyl-2-(4Z,7Z,10Z,13Z,16Z,19Z-docosahexaenoyl)-sn-glycero-3-phosphocholine + H2O = (4Z,7Z,10Z,13Z,16Z,19Z)-docosahexaenoate + 1-hexadecanoyl-sn-glycero-3-phosphocholine + H(+). Functionally, secretory calcium-dependent phospholipase A2 that primarily targets extracellular lipids, exerting anti-inflammatory and immunosuppressive functions. Hydrolyzes the ester bond of the fatty acyl group attached at sn-2 position of phospholipids (phospholipase A2 activity) with preference for phosphatidylethanolamines and phosphatidylglycerols over phosphatidylcholines. In draining lymph nodes, selectively hydrolyzes diacyl and alkenyl forms of phosphatidylethanolamines, releasing omega-3 polyunsaturated fatty acids (PUFAs) such as eicosapentaenoate and docosahexaenoate that are precursors of the anti-inflammatory lipid mediators, resolvins. During the resolution phase of acute inflammation drives docosahexaenoate-derived resolvin D1 synthesis, which suppresses dendritic cell activation and T-helper 1 immune response. May act in an autocrine and paracrine manner. Via a mechanism independent of its catalytic activity, promotes differentiation of regulatory T cells (Tregs) and participates in the maintenance of immune tolerance. May contribute to lipid remodeling of cellular membranes and generation of lipid mediators involved in pathogen clearance. Displays bactericidal activity against Gram-positive bacteria by directly hydrolyzing phospholipids of the bacterial membrane. This Homo sapiens (Human) protein is Group IID secretory phospholipase A2 (PLA2G2D).